Consider the following 434-residue polypeptide: Alpha-enolase (434 aa).

Ser-2 is modified (N-acetylserine). Lys-5 is subject to N6-acetyllysine. Phosphoserine is present on Ser-27. Residues 31–38 are epitope recognized by CAR and healthy patient antibodies; the sequence is FRAAVPSG. Ser-40 provides a ligand contact to Mg(2+). Tyr-44 carries the post-translational modification Phosphotyrosine. The tract at residues 56–63 is epitope recognized by CAR antibodies; the sequence is RYMGKGVS. Lys-60 is modified (N6-acetyllysine; alternate). Lys-60 carries the post-translational modification N6-succinyllysine; alternate. N6-acetyllysine is present on residues Lys-64 and Lys-71. The residue at position 89 (Lys-89) is an N6-acetyllysine; alternate. The residue at position 89 (Lys-89) is an N6-succinyllysine; alternate. N6-acetyllysine is present on residues Lys-92 and Lys-126. Residues 97–237 are required for repression of c-myc promoter activity; the sequence is MDGTENKSKF…KTAIGKAGYT (141 aa). Substrate is bound by residues His-158 and Glu-167. Lys-193 and Lys-199 each carry N6-acetyllysine. N6-acetyllysine; alternate is present on Lys-202. Lys-202 participates in a covalent cross-link: Glycyl lysine isopeptide (Lys-Gly) (interchain with G-Cter in SUMO2); alternate. The active-site Proton donor is the Glu-210. An N6-acetyllysine; alternate mark is found at Lys-228 and Lys-233. At Lys-228 the chain carries N6-succinyllysine; alternate. Residue Lys-228 is modified to N6-(2-hydroxyisobutyryl)lysine; alternate. The residue at position 233 (Lys-233) is an N6-malonyllysine; alternate. Residue Asp-245 coordinates Mg(2+). Residue Ser-254 is modified to Phosphoserine. Lys-256 is modified (N6-acetyllysine). 2 positions are modified to phosphoserine: Ser-263 and Ser-272. Lys-281 is subject to N6-acetyllysine; alternate. Residue Lys-281 is modified to N6-(2-hydroxyisobutyryl)lysine; alternate. At Lys-285 the chain carries N6-acetyllysine. Tyr-287 carries the phosphotyrosine modification. Position 291 is a phosphoserine (Ser-291). Positions 293 and 318 each coordinate Mg(2+). Substrate contacts are provided by Glu-293 and Asp-318. Lys-335 and Lys-343 each carry N6-acetyllysine. The active-site Proton acceptor is Lys-343. Substrate contacts are provided by residues 370–373 and Lys-394; that span reads SHRS. Positions 405–434 are required for interaction with PLG; sequence AKYNQLLRIEEELGSKAKFAGRNFRNPLAK. Lys-406 bears the N6-acetyllysine mark. N6-acetyllysine; alternate is present on Lys-420. Lys-420 carries the N6-succinyllysine; alternate modification. Lys-420 bears the N6-malonyllysine; alternate mark.

It belongs to the enolase family. Mammalian enolase is composed of 3 isozyme subunits, alpha, beta and gamma, which can form homodimers or heterodimers which are cell-type and development-specific. ENO1 interacts with PLG in the neuronal plasma membrane and promotes its activation. The C-terminal lysine is required for this binding. Isoform MBP-1 interacts with TRAPPC2B. Interacts with ENO4 and PGAM2. Interacts with CMTM6. It depends on Mg(2+) as a cofactor. ISGylated. In terms of processing, lysine 2-hydroxyisobutyrylation (Khib) by p300/EP300 activates the phosphopyruvate hydratase activity. In terms of tissue distribution, the alpha/alpha homodimer is expressed in embryo and in most adult tissues. The alpha/beta heterodimer and the beta/beta homodimer are found in striated muscle, and the alpha/gamma heterodimer and the gamma/gamma homodimer in neurons.

Its subcellular location is the cytoplasm. It is found in the cell membrane. The protein localises to the myofibril. The protein resides in the sarcomere. It localises to the m line. Its subcellular location is the nucleus. The enzyme catalyses (2R)-2-phosphoglycerate = phosphoenolpyruvate + H2O. It functions in the pathway carbohydrate degradation; glycolysis; pyruvate from D-glyceraldehyde 3-phosphate: step 4/5. Glycolytic enzyme the catalyzes the conversion of 2-phosphoglycerate to phosphoenolpyruvate. In addition to glycolysis, involved in various processes such as growth control, hypoxia tolerance and allergic responses. May also function in the intravascular and pericellular fibrinolytic system due to its ability to serve as a receptor and activator of plasminogen on the cell surface of several cell-types such as leukocytes and neurons. Stimulates immunoglobulin production. In terms of biological role, binds to the myc promoter and acts as a transcriptional repressor. May be a tumor suppressor. This chain is Alpha-enolase (ENO1), found in Homo sapiens (Human).